The primary structure comprises 318 residues: NADH-ubiquinone oxidoreductase chain 1 (318 aa).

8 helical membrane-spanning segments follow: residues 2 to 22 (FLIN…FLTL), 69 to 89 (LLFI…WLPI), 102 to 122 (ILFI…SGWA), 146 to 166 (LAII…SSLI), 171 to 191 (YMWI…STLA), 222 to 242 (LFFL…AILF), 253 to 273 (EMFT…FLWI), and 294 to 314 (LPLT…LSSI).

This sequence belongs to the complex I subunit 1 family. Core subunit of respiratory chain NADH dehydrogenase (Complex I) which is composed of 45 different subunits.

The protein resides in the mitochondrion inner membrane. The enzyme catalyses a ubiquinone + NADH + 5 H(+)(in) = a ubiquinol + NAD(+) + 4 H(+)(out). Functionally, core subunit of the mitochondrial membrane respiratory chain NADH dehydrogenase (Complex I) which catalyzes electron transfer from NADH through the respiratory chain, using ubiquinone as an electron acceptor. Essential for the catalytic activity and assembly of complex I. The sequence is that of NADH-ubiquinone oxidoreductase chain 1 (MT-ND1) from Oryctolagus cuniculus (Rabbit).